We begin with the raw amino-acid sequence, 122 residues long: Large ribosomal subunit protein uL14 (122 aa).

Belongs to the universal ribosomal protein uL14 family. As to quaternary structure, part of the 50S ribosomal subunit. Forms a cluster with proteins L3 and L19. In the 70S ribosome, L14 and L19 interact and together make contacts with the 16S rRNA in bridges B5 and B8.

In terms of biological role, binds to 23S rRNA. Forms part of two intersubunit bridges in the 70S ribosome. This Chloroherpeton thalassium (strain ATCC 35110 / GB-78) protein is Large ribosomal subunit protein uL14.